The chain runs to 704 residues: MARTTPIARYRNIGISAHIDAGKTTTTERILFYTGVNHKIGEVHDGAATMDWMEQEQERGITITSAATTAFWSGMAKQYEPHRINIIDTPGHVDFTIEVERSMRVLDGAVMVYCAVGGVQPQSETVWRQANKYKVPRIAFVNKMDRMGANFLKVVNQIKTRLGANPVPLQLAIGAEEHFTGVVDLVKMKAINWNDADQGVTFEYEDIPADMVELANEWHQNLIESAAEASEELMEKYLGGEELTEAEIKGALRQRVLNNEIILVTCGSAFKNKGVQAMLDAVIDYLPSPVDVPAINGILDDGKDTPAERHASDDEPFSALAFKIATDPFVGNLTFFRVYSGVVNSGDTVLNSVKAARERFGRIVQMHANKREEIKEVRAGDIAAAIGLKDVTTGDTLCDPDAPIILERMEFPEPVISIAVEPKTKADQEKMGLALGRLAKEDPSFRVWTDEESNQTIIAGMGELHLDIIVDRMKREFNVEANVGKPQVAYRETIRQKVTDVEGKHAKQSGGRGQYGHVVIDMYPLEPGSNPKGYEFINDIKGGVIPGEYIPAVDKGIQEQLKAGPLAGYPVVDMGIRLHFGSYHDVDSSELAFKLAASIAFKEGFKKAKPVLLEPIMKVEVETPEENTGDVIGDLSRRRGMLKGQESEVTGVKIHAEVPLSEMFGYATQLRSLTKGRASYTMEFLKYDEAPSNVAQAVIEARGK.

In terms of domain architecture, tr-type G spans 8–290 (ARYRNIGISA…AVIDYLPSPV (283 aa)). Residues 17 to 24 (AHIDAGKT), 88 to 92 (DTPGH), and 142 to 145 (NKMD) each bind GTP. 2 positions are modified to N6-acetyllysine: K504 and K643.

Belongs to the TRAFAC class translation factor GTPase superfamily. Classic translation factor GTPase family. EF-G/EF-2 subfamily.

The protein resides in the cytoplasm. Its function is as follows. Catalyzes the GTP-dependent ribosomal translocation step during translation elongation. During this step, the ribosome changes from the pre-translocational (PRE) to the post-translocational (POST) state as the newly formed A-site-bound peptidyl-tRNA and P-site-bound deacylated tRNA move to the P and E sites, respectively. Catalyzes the coordinated movement of the two tRNA molecules, the mRNA and conformational changes in the ribosome. This Shigella sonnei (strain Ss046) protein is Elongation factor G.